We begin with the raw amino-acid sequence, 883 residues long: Kinesin-like protein 5 (883 aa).

One can recognise a Kinesin motor domain in the interval 6-390 (SITVTVRVRP…LKYANRAKNI (385 aa)). 144–151 (GATGCGKT) contributes to the ATP binding site. Coiled coils occupy residues 396–435 (RNMISVDRHVSQYVKAIVELREQISELENRLAQIDLSSQS) and 563–588 (LQDEVDLLKSIIENQVLDAQNKVDEF). Residues 755 to 785 (VSPMLEDKPEPGLLIKSPLEKKQEVNSESTQ) are disordered.

This sequence belongs to the TRAFAC class myosin-kinesin ATPase superfamily. Kinesin family. Kinesin II subfamily. As to quaternary structure, heterodimer with klp6.

The protein resides in the cytoplasm. It is found in the cytoskeleton. It localises to the chromosome. The protein localises to the centromere. Its subcellular location is the kinetochore. The protein resides in the spindle. Functionally, has a role in establishing metaphase during mitosis. Required for chromosome segregation where it generates tension during kinetochore capturing. This chain is Kinesin-like protein 5 (klp5), found in Schizosaccharomyces pombe (strain 972 / ATCC 24843) (Fission yeast).